Here is a 185-residue protein sequence, read N- to C-terminus: MGRGKTPNLGEFRVATDQSASRKISQFCVRLEAKQRLRFNYGLTERQLLKYVRIARKTRGSTGQVPPQLLEMRLDNVIFRLGMASTIPAARQLVNHRHILVNNRIVDVPSYRCKPKDIITVRNRPTSCNALKGESPGGGETPDHLTASLSEGSRPTGLVNRIANRESVSLNINELLVVEYYSRKA.

The region spanning 72–134 (MRLDNVIFRL…PTSCNALKGE (63 aa)) is the S4 RNA-binding domain. Residues 132-154 (KGESPGGGETPDHLTASLSEGSR) form a disordered region.

It belongs to the universal ribosomal protein uS4 family. As to quaternary structure, part of the 30S ribosomal subunit. Contacts protein S5. The interaction surface between S4 and S5 is involved in control of translational fidelity.

It localises to the plastid. The protein resides in the chloroplast. In terms of biological role, one of the primary rRNA binding proteins, it binds directly to 16S rRNA where it nucleates assembly of the body of the 30S subunit. Its function is as follows. With S5 and S12 plays an important role in translational accuracy. The sequence is that of Small ribosomal subunit protein uS4c (rps4) from Woodwardia radicans (Rooting chainfern).